The chain runs to 304 residues: Undecaprenyl-diphosphatase (304 aa).

8 helical membrane-spanning segments follow: residues 5–25 (FLFILKALIIAIVEGLTEFVP), 47–67 (GFPEMYEVVIQLGAILAVVVL), 72–92 (ISSSVVEFLCYIFSFIGLKTS), 111–131 (FGINVIIGTIPAAILGLLFHD), 137–157 (LFSTKTVAIGFIVGGILLIVI), 209–231 (ISGLSTTVATEFTFFLAIPAMVG), 248–268 (TNWISLILGFIVAFIVSLVVI), and 283–303 (FAIYRVFAGIVLAILIFTKVI).

It belongs to the UppP family.

It localises to the cell membrane. The enzyme catalyses di-trans,octa-cis-undecaprenyl diphosphate + H2O = di-trans,octa-cis-undecaprenyl phosphate + phosphate + H(+). Functionally, catalyzes the dephosphorylation of undecaprenyl diphosphate (UPP). Confers resistance to bacitracin. The chain is Undecaprenyl-diphosphatase from Clostridium perfringens (strain ATCC 13124 / DSM 756 / JCM 1290 / NCIMB 6125 / NCTC 8237 / Type A).